Here is a 94-residue protein sequence, read N- to C-terminus: Ig kappa-B5 chain V region 2699 (94 aa).

The framework-1 stretch occupies residues Ala1–Cys23. Residues Gln24–Ala34 form a complementarity-determining-1 region. The tract at residues Trp35–Tyr49 is framework-2. The complementarity-determining-2 stretch occupies residues Ser50–Ser56. The tract at residues Gly57–Val82 is framework-3. A region of interest (complementarity-determining-3) is located at residue Ser83. The segment at Phe84–Glu93 is framework-4.

This is Ig kappa-B5 chain V region 2699 from Oryctolagus cuniculus (Rabbit).